Here is a 1696-residue protein sequence, read N- to C-terminus: PH domain leucine-rich repeat protein phosphatase 1 (1696 aa).

Met1 is subject to N-acetylmethionine. Disordered regions lie at residues 1 to 97 and 222 to 398; these read MEPA…GGGA and LGHG…VVGE. The span at 79–92 shows a compositional bias: low complexity; the sequence is VPQPAAGGAAPVTA. Positions 313–325 are enriched in polar residues; the sequence is DTESFSLSPSAES. Ser378 is subject to Phosphoserine. The PH domain occupies 499-599; that stretch reads RIQLSGMYNV…WLRQVSKVAS (101 aa). LRR repeat units lie at residues 601–622, 624–645, 655–676, 678–699, 701–722, 724–746, 836–857, 858–879, 881–902, 904–925, 926–947, 950–971, 976–996, 1000–1021, 1024–1045, 1047–1068, 1069–1090, and 1092–1113; these read RISS…LFYS, DLTH…PAAR, KLKS…VCSI, TLAE…VGAM, NLQT…LENM, QLSY…EKLT, FLKA…PVPN, YLSY…VCES, KLEV…LFCN, SLRK…LERT, SVEV…LLMK, SLRF…TLSE, ILQE…PLLT, RLKI…KMAK, ELEE…IMNC, RMHT…MQLP, EVKC…ENLP, and KLQE…SLEL. The PPM-type phosphatase domain occupies 1138–1385; it reads SHGYTEASGV…DSISAVVVQL (248 aa). Residues Asp1173, Gly1174, Lys1337, and Asp1376 each coordinate Mn(2+). 2 disordered regions span residues 1422-1473 and 1610-1696; these read RPSD…SPAY and KPGG…DTPL. Low complexity-rich tracts occupy residues 1431 to 1452, 1647 to 1660, and 1670 to 1680; these read SSSS…MSSE, QQQQ…QQQQ, and QAQAQAQAQAQ. The PDZ-binding signature appears at 1694–1696; the sequence is TPL.

In terms of assembly, interacts with the nucleotide free form of K-Ras (KRAS) via its LRR repeats. Interacts with AKT2, AKT3 and PRKCB isoform beta-II. Interacts with WDR48 and USP12. Requires Mn(2+) as cofactor. Mainly present in brain (at protein level). Isoform 2 is more abundant in adult brain neurons than isoform 1 in. Isoforms 1 and 2 are expressed in the retina but not found in rod outer segments.

Its subcellular location is the cytoplasm. The protein localises to the membrane. It localises to the cell membrane. The protein resides in the nucleus. It is found in the nucleoplasm. Its subcellular location is the nucleus membrane. It carries out the reaction O-phospho-L-seryl-[protein] + H2O = L-seryl-[protein] + phosphate. The enzyme catalyses O-phospho-L-threonyl-[protein] + H2O = L-threonyl-[protein] + phosphate. Its activity is regulated as follows. Insensitive to okadaic acid. Deubiquitination by WDR48-USP12 complex positively regulates PHLPP1 stability. Functionally, protein phosphatase involved in regulation of Akt and PKC signaling. Mediates dephosphorylation in the C-terminal domain hydrophobic motif of members of the AGC Ser/Thr protein kinase family; specifically acts on 'Ser-473' of AKT2 and AKT3, 'Ser-660' of PRKCB and 'Ser-657' of PRKCA. Isoform 2 seems to have a major role in regulating Akt signaling in hippocampal neurons while isoform 1 may promote Akt and PKC activation and inhibit ERK signaling. Akt regulates the balance between cell survival and apoptosis through a cascade that primarily alters the function of transcription factors that regulate pro- and antiapoptotic genes. Dephosphorylation of 'Ser-473' of Akt triggers apoptosis and suppression of tumor growth. Dephosphorylation of PRKCA and PRKCB leads to their destabilization and degradation. Dephosphorylates STK4 on 'Thr-387' leading to STK4 activation and apoptosis. Dephosphorylates RPS6KB1 and is involved in regulation of cap-dependent translation. Inhibits cancer cell proliferation and may act as a tumor suppressor. Dephosphorylates RAF1 inhibiting its kinase activity. May act as a negative regulator of K-Ras signaling in membrane rafts. Involved in the hippocampus-dependent long-term memory formation. Involved in circadian control by regulating the consolidation of circadian periodicity after resetting. Involved in development and function of regulatory T-cells. This is PH domain leucine-rich repeat protein phosphatase 1 (Phlpp1) from Rattus norvegicus (Rat).